Reading from the N-terminus, the 216-residue chain is Probable transaldolase (216 aa).

K83 (schiff-base intermediate with substrate) is an active-site residue.

This sequence belongs to the transaldolase family. Type 3B subfamily.

Its subcellular location is the cytoplasm. It carries out the reaction D-sedoheptulose 7-phosphate + D-glyceraldehyde 3-phosphate = D-erythrose 4-phosphate + beta-D-fructose 6-phosphate. It functions in the pathway carbohydrate degradation; pentose phosphate pathway; D-glyceraldehyde 3-phosphate and beta-D-fructose 6-phosphate from D-ribose 5-phosphate and D-xylulose 5-phosphate (non-oxidative stage): step 2/3. Its function is as follows. Transaldolase is important for the balance of metabolites in the pentose-phosphate pathway. In Hyphomonas neptunium (strain ATCC 15444), this protein is Probable transaldolase.